Here is a 482-residue protein sequence, read N- to C-terminus: Reduced viability upon starvation protein 167 (482 aa).

Ser2 is subject to N-acetylserine. The BAR domain occupies 17 to 254 (FRQKFKMGEQ…YFDLNSDIVE (238 aa)). 2 coiled-coil regions span residues 31–64 (VYEDAERRFQELEQETKKLSEESKRYSTAVNGML) and 174–204 (AKDEERLYKAQAQVEVAQQEYDYYNDLLKTQ). Lys242 participates in a covalent cross-link: Glycyl lysine isopeptide (Lys-Gly) (interchain with G-Cter in ubiquitin). A phosphoserine; by FUS3 and PHO85 mark is found at Ser299, Ser321, and Ser379. The segment at 382-407 (LTGLGFQQSPQQQQGPPPAYSNPLTS) is disordered. The SH3 domain maps to 421 to 482 (PGVETVTALY…PGNYVQLNKN (62 aa)). A Glycyl lysine isopeptide (Lys-Gly) (interchain with G-Cter in ubiquitin) cross-link involves residue Lys481.

Binds to actin. Interacts with ABP1, GYL1, GYP5, PCL2 and YBR108W. Post-translationally, phosphorylated redundantly by cyclin-dependent kinase PHO85 in association with PCL1,2-type cyclins or by MAP kinase FUS3. Phosphorylation inhibits interaction with complexes involved in actin cytoskeleton function.

Its subcellular location is the cytoplasm. The protein resides in the cytoskeleton. Component of a cytoskeletal structure that is required for the formation of endocytic vesicles at the plasma membrane level. Could be implicated in cytoskeletal reorganization in response to environmental stresses and could act in the budding site selection mechanism. The polypeptide is Reduced viability upon starvation protein 167 (RVS167) (Saccharomyces cerevisiae (strain ATCC 204508 / S288c) (Baker's yeast)).